The chain runs to 202 residues: Ribosomal RNA small subunit methyltransferase G (202 aa).

S-adenosyl-L-methionine-binding positions include Gly-75, Phe-80, 125–126 (VQ), and Arg-139.

The protein belongs to the methyltransferase superfamily. RNA methyltransferase RsmG family.

The protein resides in the cytoplasm. Specifically methylates the N7 position of a guanine in 16S rRNA. The sequence is that of Ribosomal RNA small subunit methyltransferase G from Mesomycoplasma hyopneumoniae (strain 232) (Mycoplasma hyopneumoniae).